We begin with the raw amino-acid sequence, 211 residues long: GTP-binding protein ypt5 (211 aa).

Residue 21-28 (GDSAVGKS) coordinates GTP. The Effector region motif lies at 43–51 (RESTIGAAF). Residues 70–74 (DTAGQ) and 128–131 (NKLD) each bind GTP. 2 S-geranylgeranyl cysteine lipidation sites follow: Cys209 and Cys211. Cysteine methyl ester is present on Cys211.

The protein belongs to the small GTPase superfamily. Rab family.

It localises to the cell membrane. Protein transport. Probably involved in vesicular traffic. In Schizosaccharomyces pombe (strain 972 / ATCC 24843) (Fission yeast), this protein is GTP-binding protein ypt5 (ypt5).